We begin with the raw amino-acid sequence, 103 residues long: Large ribosomal subunit protein bL21 (103 aa).

It belongs to the bacterial ribosomal protein bL21 family. As to quaternary structure, part of the 50S ribosomal subunit. Contacts protein L20.

This protein binds to 23S rRNA in the presence of protein L20. The protein is Large ribosomal subunit protein bL21 of Aliivibrio salmonicida (strain LFI1238) (Vibrio salmonicida (strain LFI1238)).